Here is a 93-residue protein sequence, read N- to C-terminus: Neutrophil cationic peptide 1 type A (93 aa).

The signal sequence occupies residues 1–19 (MRTVPLFAACLLLTLMAQA). The propeptide occupies 20–62 (EPLPRAADHSDTKMKGDREDHVAVISFWEEESTSLEDAGAGAG). 3 disulfides stabilise this stretch: Cys65–Cys93, Cys67–Cys82, and Cys72–Cys92.

It belongs to the alpha-defensin family.

Its subcellular location is the secreted. Its function is as follows. Has antibiotic, anti-fungi and antiviral activity. The chain is Neutrophil cationic peptide 1 type A from Cavia porcellus (Guinea pig).